The chain runs to 162 residues: Interleukin-15 (162 aa).

The N-terminal stretch at 1 to 29 (MRILKPYLRSTSIQCYLCLLLNSHFLTEA) is a signal peptide. The propeptide occupies 30 to 48 (GIHVFILGCISAGLPKTEA). Disulfide bonds link Cys83-Cys133 and Cys90-Cys136. Asn113, Asn121, and Asn127 each carry an N-linked (GlcNAc...) asparagine glycan.

Belongs to the IL-15/IL-21 family.

Its subcellular location is the secreted. In terms of biological role, cytokine that plays a major role in the development of inflammatory and protective immune responses to microbial invaders and parasites by modulating immune cells of both the innate and adaptive immune systems. Stimulates the proliferation of natural killer cells, T-cells and B-cells and promotes the secretion of several cytokines. In monocytes, induces the production of IL8 and monocyte chemotactic protein 1/CCL2, two chemokines that attract neutrophils and monocytes respectively to sites of infection. Unlike most cytokines, which are secreted in soluble form, IL15 is expressed in association with its high affinity IL15RA on the surface of IL15-producing cells and delivers signals to target cells that express IL2RB and IL2RG receptor subunits. Binding to its receptor triggers the phosphorylation of JAK1 and JAK3 and the recruitment and subsequent phosphorylation of signal transducer and activator of transcription-3/STAT3 and STAT5. In mast cells, induces the rapid tyrosine phosphorylation of STAT6 and thereby controls mast cell survival and release of cytokines such as IL4. The protein is Interleukin-15 (IL15) of Bubalus bubalis (Domestic water buffalo).